We begin with the raw amino-acid sequence, 270 residues long: Type III pantothenate kinase (270 aa).

6–13 serves as a coordination point for ATP; that stretch reads DVRNTHTV. 109 to 112 is a substrate binding site; it reads GADR. D111 functions as the Proton acceptor in the catalytic mechanism. D131 provides a ligand contact to K(+). ATP is bound at residue S134. Residue T186 coordinates substrate.

It belongs to the type III pantothenate kinase family. In terms of assembly, homodimer. NH4(+) is required as a cofactor. Requires K(+) as cofactor.

The protein resides in the cytoplasm. It carries out the reaction (R)-pantothenate + ATP = (R)-4'-phosphopantothenate + ADP + H(+). Its pathway is cofactor biosynthesis; coenzyme A biosynthesis; CoA from (R)-pantothenate: step 1/5. Functionally, catalyzes the phosphorylation of pantothenate (Pan), the first step in CoA biosynthesis. The protein is Type III pantothenate kinase of Mycolicibacterium gilvum (strain PYR-GCK) (Mycobacterium gilvum (strain PYR-GCK)).